The chain runs to 101 residues: Small ribosomal subunit protein uS14A (101 aa).

The interval 31–74 (IRKPSTPEADRAAAQAALQRLPRDASPVRLRNRDAADGRPRGHL) is disordered. The segment covering 61–70 (RNRDAADGRP) has biased composition (basic and acidic residues).

The protein belongs to the universal ribosomal protein uS14 family. As to quaternary structure, part of the 30S ribosomal subunit. Contacts proteins S3 and S10.

Functionally, binds 16S rRNA, required for the assembly of 30S particles and may also be responsible for determining the conformation of the 16S rRNA at the A site. This chain is Small ribosomal subunit protein uS14A, found in Nocardia farcinica (strain IFM 10152).